The chain runs to 84 residues: UPF0248 protein Pisl_1919 (84 aa).

It belongs to the UPF0248 family.

This chain is UPF0248 protein Pisl_1919, found in Pyrobaculum islandicum (strain DSM 4184 / JCM 9189 / GEO3).